The chain runs to 554 residues: Perforin-1 (554 aa).

The N-terminal stretch at 1 to 20 (MATCLFLLGLFLLLPRPVPA) is a signal peptide. Intrachain disulfides connect cysteine 22–cysteine 75, cysteine 30–cysteine 72, and cysteine 101–cysteine 175. Residues 26–374 (TRSECKQKHK…HYIMSRARWQ (349 aa)) form the MACPF domain. Residues 128–148 (WRVGLDVNPRPEANMRASVAG) traverse the membrane as a beta stranded segment. N-linked (GlcNAc...) asparagine glycosylation occurs at asparagine 204. Disulfide bonds link cysteine 241–cysteine 407, cysteine 376–cysteine 392, cysteine 380–cysteine 394, and cysteine 396–cysteine 406. Residues 256-278 (CLNVEAQVSIGAQASVSSEYKAC) form a beta stranded membrane-spanning segment. N-linked (GlcNAc...) asparagine glycosylation is present at asparagine 375. In terms of domain architecture, EGF-like spans 375–407 (NCSRPCRSGQHKSSHDSCQCECQDSKVTNQDCC). In terms of domain architecture, C2 spans 395–513 (ECQDSKVTNQ…FHEVTCELNH (119 aa)). Glycine 428, aspartate 429, threonine 432, alanine 433, aspartate 435, asparagine 454, glutamate 467, aspartate 483, alanine 484, aspartate 485, tryptophan 488, aspartate 489, aspartate 490, and aspartate 491 together coordinate Ca(2+). Intrachain disulfides connect cysteine 496-cysteine 509 and cysteine 524-cysteine 533. The N-linked (GlcNAc...) asparagine glycan is linked to asparagine 548.

This sequence belongs to the complement C6/C7/C8/C9 family. Monomer, as soluble protein. Homooligomer; homooligomerizes to form a pore-forming ring. Ca(2+) is required as a cofactor. N-glycosylated. The glycosylation sites are facing the interior of the pore. In terms of tissue distribution, detected in cytotoxic T-lymphocytes and natural killer cells.

Its subcellular location is the cytolytic granule. The protein resides in the secreted. It localises to the cell membrane. The protein localises to the endosome lumen. Its function is as follows. Pore-forming protein that plays a key role in granzyme-mediated programmed cell death, and in defense against virus-infected or neoplastic cells. Can insert into the membrane of target cells in its calcium-bound form, oligomerize and form large pores. Promotes cytolysis and apoptosis of target cells by mediating the passage and uptake of cytotoxic granzymes. Facilitates the delivery of cationic cargo protein, while anionic or neural proteins are not delivered efficiently. Perforin pores allow the release of mature caspase-7 (CASP7) into the extracellular milieu. The polypeptide is Perforin-1 (Prf1) (Mus musculus (Mouse)).